Consider the following 78-residue polypeptide: Translation initiation factor IF-1, plastid (78 aa).

One can recognise an S1-like domain in the interval 1–72; the sequence is MKKQDLIDME…TKGRITYRLR (72 aa).

Belongs to the IF-1 family. Component of the 30S ribosomal translation pre-initiation complex which assembles on the 30S ribosome in the order IF-2 and IF-3, IF-1 and N-formylmethionyl-tRNA(fMet); mRNA recruitment can occur at any time during PIC assembly.

The protein resides in the plastid. Its function is as follows. One of the essential components for the initiation of protein synthesis. Stabilizes the binding of IF-2 and IF-3 on the 30S subunit to which N-formylmethionyl-tRNA(fMet) subsequently binds. Helps modulate mRNA selection, yielding the 30S pre-initiation complex (PIC). Upon addition of the 50S ribosomal subunit IF-1, IF-2 and IF-3 are released leaving the mature 70S translation initiation complex. The polypeptide is Translation initiation factor IF-1, plastid (Aneura mirabilis (Parasitic liverwort)).